A 364-amino-acid polypeptide reads, in one-letter code: SH3 and cysteine-rich domain-containing protein 3 (364 aa).

2 disordered regions span residues 1–89 (MTEK…NDKP) and 189–244 (NKER…HKQP). A compositionally biased stretch (acidic residues) spans 64–78 (YEEEEEEEEEEEEPP). The Phorbol-ester/DAG-type zinc finger occupies 89 to 140 (PHKFKDHFFKKPKFCDVCARMIVLNNKFGLRCKNCKTNIHEHCQSYVEMQRC). The segment covering 212 to 242 (ESARPEEGKPQDGNPEGDKKAEKKTPDDKHK) has biased composition (basic and acidic residues). SH3 domains lie at 247-306 (QQSH…RVRA) and 307-364 (GERV…LEEI).

In terms of assembly, interacts (via SH3 domains) with the calcium channels CACNA1S and CACNA1C. Component of a calcium channel complex with CACNA1S and CACNB1. Component of a calcium channel complex with CACNA1C and CACNB1.

The protein localises to the cytoplasm. It is found in the cell membrane. Its subcellular location is the sarcolemma. It localises to the T-tubule. Required for normal excitation-contraction coupling in skeletal muscle and for normal muscle contraction in response to membrane depolarization. Required for normal Ca(2+) release from the sarcplasmic reticulum, which ultimately leads to muscle contraction. Probably functions via its effects on muscle calcium channels. Increases CACNA1S channel activity, in addition to its role in enhancing the expression of CACNA1S at the cell membrane. Has a redundant role in promoting the expression of the calcium channel CACNA1S at the cell membrane. Slows down the inactivation rate of the calcium channel CACNA1C. This chain is SH3 and cysteine-rich domain-containing protein 3 (STAC3), found in Homo sapiens (Human).